The following is a 261-amino-acid chain: GTP cyclohydrolase FolE2 (261 aa).

Belongs to the GTP cyclohydrolase IV family.

It carries out the reaction GTP + H2O = 7,8-dihydroneopterin 3'-triphosphate + formate + H(+). The protein operates within cofactor biosynthesis; 7,8-dihydroneopterin triphosphate biosynthesis; 7,8-dihydroneopterin triphosphate from GTP: step 1/1. In terms of biological role, converts GTP to 7,8-dihydroneopterin triphosphate. This chain is GTP cyclohydrolase FolE2, found in Geobacter metallireducens (strain ATCC 53774 / DSM 7210 / GS-15).